The primary structure comprises 310 residues: Cytochrome f (310 aa).

Positions 1–23 (MRRLLSSTFAALIVGLAVFSAPA) are cleaved as a signal peptide. Residues Y28, C48, C51, and H52 each contribute to the heme site. The helical transmembrane segment at 277 to 297 (IYGMLAFFAAVALAQIMLVLK) threads the bilayer.

It belongs to the cytochrome f family. The 4 large subunits of the cytochrome b6-f complex are cytochrome b6, subunit IV (17 kDa polypeptide, PetD), cytochrome f and the Rieske protein, while the 4 small subunits are PetG, PetL, PetM and PetN. The complex functions as a dimer. It depends on heme as a cofactor.

The protein localises to the cellular thylakoid membrane. Its function is as follows. Component of the cytochrome b6-f complex, which mediates electron transfer between photosystem II (PSII) and photosystem I (PSI), cyclic electron flow around PSI, and state transitions. The polypeptide is Cytochrome f (Synechococcus sp. (strain CC9311)).